Reading from the N-terminus, the 166-residue chain is MNYTSYILAFQLCVILCSSGYYCQAMFFKEIENLKEYFNASNPDVADGGPLFLDILKNWREESDKTIIQSQIVSFYLKLFENFKDNQIIQRSMDTIKEDMLFKFFNSSTSKRSDFLKLIQIPVNDMQVQRKAINELIKVMNDLSPRSNLTKRKRSQNLFRGRRASK.

The first 23 residues, 1–23 (MNYTSYILAFQLCVILCSSGYYC), serve as a signal peptide directing secretion. Gln24 is modified (pyrrolidone carboxylic acid). N-linked (GlcNAc...) asparagine glycosylation is found at Asn39 and Asn106.

The protein belongs to the type II (or gamma) interferon family. In terms of assembly, homodimer. Interacts with IFNGR1 (via extracellular domain); this interaction promotes IFNGR1 dimerization. In terms of tissue distribution, released primarily from activated T lymphocytes.

It is found in the secreted. Type II interferon produced by immune cells such as T-cells and NK cells that plays crucial roles in antimicrobial, antiviral, and antitumor responses by activating effector immune cells and enhancing antigen presentation. Primarily signals through the JAK-STAT pathway after interaction with its receptor IFNGR1 to affect gene regulation. Upon IFNG binding, IFNGR1 intracellular domain opens out to allow association of downstream signaling components JAK2, JAK1 and STAT1, leading to STAT1 activation, nuclear translocation and transcription of IFNG-regulated genes. Many of the induced genes are transcription factors such as IRF1 that are able to further drive regulation of a next wave of transcription. Plays a role in class I antigen presentation pathway by inducing a replacement of catalytic proteasome subunits with immunoproteasome subunits. In turn, increases the quantity, quality, and repertoire of peptides for class I MHC loading. Increases the efficiency of peptide generation also by inducing the expression of activator PA28 that associates with the proteasome and alters its proteolytic cleavage preference. Up-regulates as well MHC II complexes on the cell surface by promoting expression of several key molecules such as cathepsins B/CTSB, H/CTSH, and L/CTSL. Participates in the regulation of hematopoietic stem cells during development and under homeostatic conditions by affecting their development, quiescence, and differentiation. The polypeptide is Interferon gamma (IFNG) (Ailuropoda melanoleuca (Giant panda)).